The chain runs to 99 residues: Ribonuclease P protein component 1 (99 aa).

The protein belongs to the eukaryotic/archaeal RNase P protein component 1 family. Consists of a catalytic RNA component and at least 4-5 protein subunits.

Its subcellular location is the cytoplasm. The catalysed reaction is Endonucleolytic cleavage of RNA, removing 5'-extranucleotides from tRNA precursor.. In terms of biological role, part of ribonuclease P, a protein complex that generates mature tRNA molecules by cleaving their 5'-ends. In Methanococcus vannielii, this protein is Ribonuclease P protein component 1.